A 274-amino-acid chain; its full sequence is 4-diphosphocytidyl-2-C-methyl-D-erythritol kinase (274 aa).

The active site involves lysine 14. Residue proline 94–serine 104 participates in ATP binding. Aspartate 134 is a catalytic residue.

Belongs to the GHMP kinase family. IspE subfamily.

The catalysed reaction is 4-CDP-2-C-methyl-D-erythritol + ATP = 4-CDP-2-C-methyl-D-erythritol 2-phosphate + ADP + H(+). It participates in isoprenoid biosynthesis; isopentenyl diphosphate biosynthesis via DXP pathway; isopentenyl diphosphate from 1-deoxy-D-xylulose 5-phosphate: step 3/6. In terms of biological role, catalyzes the phosphorylation of the position 2 hydroxy group of 4-diphosphocytidyl-2C-methyl-D-erythritol. The polypeptide is 4-diphosphocytidyl-2-C-methyl-D-erythritol kinase (Thermosipho melanesiensis (strain DSM 12029 / CIP 104789 / BI429)).